An 87-amino-acid chain; its full sequence is Acyl-CoA-binding protein (87 aa).

The ACB domain occupies 2–87 (VSQLFEEKAK…VDQLIAKYSS (86 aa)). An acyl-CoA contacts are provided by residues 29-33 (YALYK), K51, and K55. K51 participates in a covalent cross-link: Glycyl lysine isopeptide (Lys-Gly) (interchain with G-Cter in ubiquitin). K72 participates in a covalent cross-link: Glycyl lysine isopeptide (Lys-Gly) (interchain with G-Cter in ubiquitin). Y74 is an an acyl-CoA binding site.

This sequence belongs to the ACBP family.

Binds medium- and long-chain acyl-CoA esters with very high affinity and may function as an intracellular carrier of acyl-CoA esters. Enhances the in vitro activity of the ceramide synthase complex. This is Acyl-CoA-binding protein (ACB1) from Saccharomyces cerevisiae (strain ATCC 204508 / S288c) (Baker's yeast).